We begin with the raw amino-acid sequence, 490 residues long: Type I restriction enzyme EcoEI methylase subunit (490 aa).

S-adenosyl-L-methionine contacts are provided by residues 163-168 (EFYTPR), 193-195 (TGG), and glutamate 226.

This sequence belongs to the N(4)/N(6)-methyltransferase family. In terms of assembly, the type I restriction/modification system is composed of three polypeptides R, M and S; the restriction enzyme has stoichiometry R(2)M(2)S(1) while the methyltransferase is M(2)S(1).

It catalyses the reaction a 2'-deoxyadenosine in DNA + S-adenosyl-L-methionine = an N(6)-methyl-2'-deoxyadenosine in DNA + S-adenosyl-L-homocysteine + H(+). Its function is as follows. The subtype gamma methyltransferase (M) subunit of a type I restriction enzyme. The M and S subunits together form a methyltransferase (MTase) that methylates two adenine residues of the sequence 5'-GAGN(7)ATGC-3'. In the presence of the R subunit the complex can also act as an endonuclease, binding to the same target sequence but cutting the DNA some distance from this site. Whether the DNA is cut or modified depends on the methylation state of the target sequence. When the target site is unmodified, the DNA is cut. When the target site is hemimethylated, the complex acts as a maintenance MTase modifying the DNA so that both strands become methylated. After locating a non-methylated recognition site, the enzyme complex serves as a molecular motor that translocates DNA in an ATP-dependent manner until a collision occurs that triggers cleavage. The chain is Type I restriction enzyme EcoEI methylase subunit (hsdM) from Escherichia coli.